We begin with the raw amino-acid sequence, 193 residues long: Ribosomal RNA small subunit methyltransferase G (193 aa).

S-adenosyl-L-methionine-binding positions include glycine 62, phenylalanine 67, 111–112, and arginine 125; that span reads IE.

It belongs to the methyltransferase superfamily. RNA methyltransferase RsmG family.

Its subcellular location is the cytoplasm. It carries out the reaction guanosine(527) in 16S rRNA + S-adenosyl-L-methionine = N(7)-methylguanosine(527) in 16S rRNA + S-adenosyl-L-homocysteine. Specifically methylates the N7 position of guanine in position 527 of 16S rRNA. This is Ribosomal RNA small subunit methyltransferase G from Gluconobacter oxydans (strain 621H) (Gluconobacter suboxydans).